Reading from the N-terminus, the 344-residue chain is Anthranilate phosphoribosyltransferase (344 aa).

Residues Gly-80, 83–84 (GD), Thr-88, 90–93 (NIST), 108–116 (KHGNRSVSS), and Ser-120 each bind 5-phospho-alpha-D-ribose 1-diphosphate. Gly-80 is a binding site for anthranilate. Ser-92 is a binding site for Mg(2+). Asn-111 contacts anthranilate. Arg-166 lines the anthranilate pocket. The Mg(2+) site is built by Asp-225 and Glu-226.

It belongs to the anthranilate phosphoribosyltransferase family. In terms of assembly, homodimer. It depends on Mg(2+) as a cofactor.

It carries out the reaction N-(5-phospho-beta-D-ribosyl)anthranilate + diphosphate = 5-phospho-alpha-D-ribose 1-diphosphate + anthranilate. It participates in amino-acid biosynthesis; L-tryptophan biosynthesis; L-tryptophan from chorismate: step 2/5. Its function is as follows. Catalyzes the transfer of the phosphoribosyl group of 5-phosphorylribose-1-pyrophosphate (PRPP) to anthranilate to yield N-(5'-phosphoribosyl)-anthranilate (PRA). The chain is Anthranilate phosphoribosyltransferase from Petrotoga mobilis (strain DSM 10674 / SJ95).